A 128-amino-acid chain; its full sequence is Large ribosomal subunit protein uL18 (128 aa).

The segment at 1 to 36 is disordered; that stretch reads MAKRSSLTRRGVSPRAAARARRHMRVRKKVRGTPER. The segment covering 18 to 31 has biased composition (basic residues); the sequence is ARARRHMRVRKKVR.

Belongs to the universal ribosomal protein uL18 family. As to quaternary structure, part of the 50S ribosomal subunit; part of the 5S rRNA/L5/L18/L25 subcomplex. Contacts the 5S and 23S rRNAs.

This is one of the proteins that bind and probably mediate the attachment of the 5S RNA into the large ribosomal subunit, where it forms part of the central protuberance. This chain is Large ribosomal subunit protein uL18, found in Thermobifida fusca (strain YX).